Reading from the N-terminus, the 366-residue chain is Phosphate acyltransferase (366 aa).

Residues 334–366 (ESAKNKETQSKQASTKNTAPKTSETTKESQQSL) are disordered. Over residues 343–366 (SKQASTKNTAPKTSETTKESQQSL) the composition is skewed to polar residues.

This sequence belongs to the PlsX family. As to quaternary structure, homodimer. Probably interacts with PlsY.

It is found in the cytoplasm. The catalysed reaction is a fatty acyl-[ACP] + phosphate = an acyl phosphate + holo-[ACP]. The protein operates within lipid metabolism; phospholipid metabolism. In terms of biological role, catalyzes the reversible formation of acyl-phosphate (acyl-PO(4)) from acyl-[acyl-carrier-protein] (acyl-ACP). This enzyme utilizes acyl-ACP as fatty acyl donor, but not acyl-CoA. The protein is Phosphate acyltransferase of Onion yellows phytoplasma (strain OY-M).